The sequence spans 367 residues: MLRRSIHTTKILQKPNATSHIWSDFTTRPSSLSIQSSKVKNYLFQKKASLDPPSISRRSNRIKYSPPEHIDEIFRMSYDFLEQRSSKFYELANKTKNPLKKDALLIKAEINNPEVQYNFQFNNKLNNVKDIIDYDVPVYRHLGKQHWESYGQMLLMQRLETLAAIPDTLPTLVPRAEVNIKFPFSTGVNKWIEPGEFLSSNVTSMRPIFKIQEYELVNVEKQLYTVLIVNPDVPDLSNDSFKTALCYGLVNINLTYNDNLIDPRKFHSSNIIADYLPPVPEKNAGKQRFVVWVFRQPLIEDKQGPNMLEIDRKELSRDDFDIRQFTKKYNLTAIGAHIWRSEWDAKVAAVREKYGLPPGRVFSRVRR.

A mitochondrion-targeting transit peptide spans 1-29 (MLRRSIHTTKILQKPNATSHIWSDFTTRP).

This sequence belongs to the phosphatidylethanolamine-binding protein family. Mitochondrion-specific ribosomal protein mL38 subfamily. As to quaternary structure, component of the mitochondrial large ribosomal subunit (mt-LSU). Mature yeast 74S mitochondrial ribosomes consist of a small (37S) and a large (54S) subunit. The 37S small subunit contains a 15S ribosomal RNA (15S mt-rRNA) and 34 different proteins. The 54S large subunit contains a 21S rRNA (21S mt-rRNA) and 46 different proteins.

It is found in the mitochondrion. Functionally, component of the mitochondrial ribosome (mitoribosome), a dedicated translation machinery responsible for the synthesis of mitochondrial genome-encoded proteins, including at least some of the essential transmembrane subunits of the mitochondrial respiratory chain. The mitoribosomes are attached to the mitochondrial inner membrane and translation products are cotranslationally integrated into the membrane. The polypeptide is Large ribosomal subunit protein mL38 (MRPL35) (Saccharomyces cerevisiae (strain ATCC 204508 / S288c) (Baker's yeast)).